We begin with the raw amino-acid sequence, 283 residues long: Protein boule-like (283 aa).

The disordered stretch occupies residues 1–25; that stretch reads MQTDSLSPSPNPVSPVPLNNPTSAP. The 78-residue stretch at 33 to 110 folds into the RRM domain; it reads NRIFVGGIDF…KKLNIGPAIR (78 aa). A DAZ domain is found at 160–184; that stretch reads PSRSVCSSPVMVAQPIYQQPAYHYQ.

It belongs to the RRM DAZ family. Interacts with DAZ1 and DAZL. As to expression, testis specific. Not expressed in early embryos, primordial germ cells and spermatogonial cells. First expressed in the cytoplasm of spermatocytes and then persists through meiosis.

It is found in the cytoplasm. Its function is as follows. Probable RNA-binding protein, which may be required during spermatogenesis. May act by binding to the 3'-UTR of mRNAs and regulating their translation. The chain is Protein boule-like (BOLL) from Homo sapiens (Human).